Reading from the N-terminus, the 208-residue chain is ATP synthase subunit b 1 (208 aa).

Residues 1-18 (MFVSTAFAQTATESQPAS) show a composition bias toward polar residues. Residues 1-26 (MFVSTAFAQTATESQPASTAGEHGAA) form a disordered region. A helical membrane pass occupies residues 56–78 (SQVLWLAITFGLFYLFLSRVVLP).

Belongs to the ATPase B chain family. In terms of assembly, F-type ATPases have 2 components, F(1) - the catalytic core - and F(0) - the membrane proton channel. F(1) has five subunits: alpha(3), beta(3), gamma(1), delta(1), epsilon(1). F(0) has three main subunits: a(1), b(2) and c(10-14). The alpha and beta chains form an alternating ring which encloses part of the gamma chain. F(1) is attached to F(0) by a central stalk formed by the gamma and epsilon chains, while a peripheral stalk is formed by the delta and b chains.

Its subcellular location is the cell inner membrane. Functionally, f(1)F(0) ATP synthase produces ATP from ADP in the presence of a proton or sodium gradient. F-type ATPases consist of two structural domains, F(1) containing the extramembraneous catalytic core and F(0) containing the membrane proton channel, linked together by a central stalk and a peripheral stalk. During catalysis, ATP synthesis in the catalytic domain of F(1) is coupled via a rotary mechanism of the central stalk subunits to proton translocation. Component of the F(0) channel, it forms part of the peripheral stalk, linking F(1) to F(0). The sequence is that of ATP synthase subunit b 1 from Brucella abortus (strain 2308).